Here is a 126-residue protein sequence, read N- to C-terminus: Major sperm protein 2 (126 aa).

Ala-2 carries the N-acetylalanine modification. The MSP domain occupies 8 to 125; the sequence is DIATMPNQKV…RRKNLPIEYN (118 aa).

In terms of tissue distribution, sperm.

The protein resides in the cell projection. The protein localises to the pseudopodium. It localises to the cytoplasm. It is found in the cytoskeleton. In terms of biological role, central component in molecular interactions underlying sperm crawling. Forms an extensive filament system that extends from sperm villipoda, along the leading edge of the pseudopod. In Globodera rostochiensis (Golden nematode worm), this protein is Major sperm protein 2 (MSP-2).